The sequence spans 479 residues: Glucan 1,3-beta-glucosidase 2 (479 aa).

A signal peptide spans Met1–Cys21. N-linked (GlcNAc...) asparagine glycans are attached at residues Asn25, Asn29, Asn63, Asn104, Asn187, and Asn193. Glu227 (proton donor) is an active-site residue. Asn254, Asn285, and Asn288 each carry an N-linked (GlcNAc...) asparagine glycan. His306 (nucleophile) is an active-site residue. 2 N-linked (GlcNAc...) asparagine glycosylation sites follow: Asn318 and Asn451. The GPI-anchor amidated serine moiety is linked to residue Ser456. Positions Ser457–Ile479 are cleaved as a propeptide — removed in mature form.

Belongs to the glycosyl hydrolase 5 (cellulase A) family. Predicted to be a substrate for cleavage by KEX2.

The protein resides in the cell membrane. It is found in the secreted. It catalyses the reaction Successive hydrolysis of beta-D-glucose units from the non-reducing ends of (1-&gt;3)-beta-D-glucans, releasing alpha-glucose.. Functionally, beta-glucanases participate in the metabolism of beta-glucan, the main structural component of the cell wall. EXG2 is not heavily involved in the exoglucanase function of the adhesion process. In Candida albicans (strain SC5314 / ATCC MYA-2876) (Yeast), this protein is Glucan 1,3-beta-glucosidase 2 (EXG2).